Consider the following 71-residue polypeptide: Long neurotoxin 1 (71 aa).

Cystine bridges form between C3/C20, C14/C41, C26/C30, C45/C56, and C57/C62.

The protein belongs to the three-finger toxin family. Long-chain subfamily. Type II alpha-neurotoxin sub-subfamily. Expressed by the venom gland.

The protein resides in the secreted. Its function is as follows. Binds with high affinity to muscular (alpha-1/CHRNA1) and neuronal (alpha-7/CHRNA7) nicotinic acetylcholine receptor (nAChR) and inhibits acetylcholine from binding to the receptor, thereby impairing neuromuscular and neuronal transmission. In Naja haje haje (Egyptian cobra), this protein is Long neurotoxin 1.